The following is a 359-amino-acid chain: MLDAVIILLSIFTFAGVGFAVVDLLPDSVQMQISNMEALRWLAAGFMSIIGLAIGLVAQTTYRRLENQIRQTPIETILTRAVGLVIGLLIANLMLAPIFLLPIPGEFSFIKPTLAVFGSVVFAFLGISLADTHGRTFMRLINPNSIETMLLAEGTLKPIPPKVVDTSCIIDGRIEPLLATGFIEGQVLVPQFVLAELQQLADASNDQKRVRGRRGLDILGSIQADFPESIVIHSADYDDIATVDAKLVHLAQEINGILLTNDYNLSKVANLQKVQILNVNDLAQAVRPIYLPGDSLELKIIKQGKEASQGVGYLEDGTMVVVEEGRNYVGSELQVIVTSALQTSAGRMIFAKPPSVLAS.

In terms of domain architecture, PINc spans 163–275 (VVDTSCIIDG…SKVANLQKVQ (113 aa)). 2 residues coordinate Mg(2+): D165 and D244. The region spanning 289-350 (IYLPGDSLEL…LQTSAGRMIF (62 aa)) is the TRAM domain.

It belongs to the ycf81 family. The protein in the central section; belongs to the PINc/VapC protein family. Mg(2+) is required as a cofactor.

Its function is as follows. An RNase. This is an uncharacterized protein from Synechocystis sp. (strain ATCC 27184 / PCC 6803 / Kazusa).